The following is a 349-amino-acid chain: E3 ubiquitin-protein ligase SINA-like 10 (349 aa).

The disordered stretch occupies residues 1–77 (MARFSVCGGD…STSDDSDREV (77 aa)). The RING-type; degenerate zinc-finger motif lies at 113-149 (CPICCEPLKIPIFQCDNGHLACTLCCTKVRNRCPSCT). The segment at 163 to 344 (VIEASRVSCL…NLQIWIGHGR (182 aa)) is SBD. The SIAH-type zinc finger occupies 166–224 (ASRVSCLNAKYGCKESTSYGNRFSHEQVCVFTPCSCPILDCHYTGYYKDLNNHVRAEHK). Zn(2+)-binding residues include Cys171, Cys178, His190, Cys194, Cys201, Cys206, His218, and His223.

Belongs to the SINA (Seven in absentia) family.

It carries out the reaction S-ubiquitinyl-[E2 ubiquitin-conjugating enzyme]-L-cysteine + [acceptor protein]-L-lysine = [E2 ubiquitin-conjugating enzyme]-L-cysteine + N(6)-ubiquitinyl-[acceptor protein]-L-lysine.. It participates in protein modification; protein ubiquitination. E3 ubiquitin-protein ligase that mediates ubiquitination and subsequent proteasomal degradation of target proteins. E3 ubiquitin ligases accept ubiquitin from an E2 ubiquitin-conjugating enzyme in the form of a thioester and then directly transfers the ubiquitin to targeted substrates. It probably triggers the ubiquitin-mediated degradation of different substrates. This Arabidopsis thaliana (Mouse-ear cress) protein is E3 ubiquitin-protein ligase SINA-like 10.